The sequence spans 262 residues: Ribosome-recycling factor, mitochondrial (262 aa).

Residues 1–55 constitute a mitochondrion transit peptide; that stretch reads MASGIRCFRLLHPAFRSYHAALTRPVSEVSMKTVSGRQHGHRQYSAYPAVPVRHF.

Belongs to the RRF family.

The protein resides in the mitochondrion. In terms of biological role, responsible for the disassembly of ribosomes from messenger RNA at the termination of mitochondrial protein biosynthesis. Acts in collaboration with GFM2. Promotes mitochondrial ribosome recycling by dissolution of intersubunit contacts. The chain is Ribosome-recycling factor, mitochondrial (Mrrf) from Mus musculus (Mouse).